Reading from the N-terminus, the 1192-residue chain is DNA topoisomerase 2 (1192 aa).

ATP is bound by residues Asn-64, Asn-95, and 142-149 (GTNGVGLK). Positions 438, 539, and 541 each coordinate Mg(2+). A Topo IIA-type catalytic domain is found at 707–1174 (IPNFLDGMTR…PGASVWLEEI (468 aa)). The active-site O-(5'-phospho-DNA)-tyrosine intermediate is Tyr-800.

This sequence belongs to the type II topoisomerase family. Requires Mg(2+) as cofactor. The cofactor is Mn(2+). Ca(2+) serves as cofactor.

Its subcellular location is the host cytoplasm. It catalyses the reaction ATP-dependent breakage, passage and rejoining of double-stranded DNA.. In terms of biological role, type II topoisomerase. Processively relaxes supercoiled DNA. Displays DNA-supercoiling activity only when associated with the viral histone-like protein. This chain is DNA topoisomerase 2, found in African swine fever virus (isolate Pig/Kenya/KEN-50/1950) (ASFV).